The primary structure comprises 401 residues: UPF0242 protein CCA_01002 (401 aa).

This sequence belongs to the UPF0242 family.

The protein is UPF0242 protein CCA_01002 of Chlamydia caviae (strain ATCC VR-813 / DSM 19441 / 03DC25 / GPIC) (Chlamydophila caviae).